A 341-amino-acid chain; its full sequence is L-threonine 3-dehydrogenase (341 aa).

C38 is a binding site for Zn(2+). Residues T40 and H43 each act as charge relay system in the active site. Zn(2+) is bound by residues H63, E64, C93, C96, C99, and C107. NAD(+)-binding positions include I175, D195, R200, 262–264 (LGI), and 286–287 (IY).

This sequence belongs to the zinc-containing alcohol dehydrogenase family. Homotetramer. Zn(2+) serves as cofactor.

It localises to the cytoplasm. It carries out the reaction L-threonine + NAD(+) = (2S)-2-amino-3-oxobutanoate + NADH + H(+). It participates in amino-acid degradation; L-threonine degradation via oxydo-reductase pathway; glycine from L-threonine: step 1/2. Functionally, catalyzes the NAD(+)-dependent oxidation of L-threonine to 2-amino-3-ketobutyrate. The protein is L-threonine 3-dehydrogenase of Pseudoalteromonas translucida (strain TAC 125).